A 1098-amino-acid polypeptide reads, in one-letter code: Unconventional myosin-If (1098 aa).

A Myosin motor domain is found at serine 17–glutamate 690. Glycine 110–threonine 117 serves as a coordination point for ATP. The tract at residues proline 579–glutamate 589 is actin-binding. An IQ domain is found at phenylalanine 693–asparagine 722. Residues lysine 728–aspartate 917 form the TH1 domain. 2 disordered regions span residues valine 913–asparagine 1009 and lysine 1021–proline 1044. The segment covering lysine 924–arginine 937 has biased composition (basic residues). Serine 1023 is modified (phosphoserine). The 58-residue stretch at threonine 1041–isoleucine 1098 folds into the SH3 domain.

This sequence belongs to the TRAFAC class myosin-kinesin ATPase superfamily. Myosin family.

Its function is as follows. Myosins are actin-based motor molecules with ATPase activity. Unconventional myosins serve in intracellular movements. Their highly divergent tails are presumed to bind to membranous compartments, which would be moved relative to actin filaments. The protein is Unconventional myosin-If (MYO1F) of Homo sapiens (Human).